The primary structure comprises 100 residues: Large ribosomal subunit protein bL21 (100 aa).

Belongs to the bacterial ribosomal protein bL21 family. As to quaternary structure, part of the 50S ribosomal subunit. Contacts protein L20.

Functionally, this protein binds to 23S rRNA in the presence of protein L20. This Mycoplasma pneumoniae (strain ATCC 29342 / M129 / Subtype 1) (Mycoplasmoides pneumoniae) protein is Large ribosomal subunit protein bL21.